The chain runs to 1358 residues: DNA-directed RNA polymerase subunit beta (1358 aa).

The protein belongs to the RNA polymerase beta chain family. In terms of assembly, the RNAP catalytic core consists of 2 alpha, 1 beta, 1 beta' and 1 omega subunit. When a sigma factor is associated with the core the holoenzyme is formed, which can initiate transcription.

The enzyme catalyses RNA(n) + a ribonucleoside 5'-triphosphate = RNA(n+1) + diphosphate. DNA-dependent RNA polymerase catalyzes the transcription of DNA into RNA using the four ribonucleoside triphosphates as substrates. This Neorickettsia sennetsu (strain ATCC VR-367 / Miyayama) (Ehrlichia sennetsu) protein is DNA-directed RNA polymerase subunit beta.